Reading from the N-terminus, the 255-residue chain is Small ribosomal subunit protein eS1 (255 aa).

An N-acetylalanine; partial modification is found at Ala2.

Belongs to the eukaryotic ribosomal protein eS1 family. In terms of assembly, component of the small ribosomal subunit. Mature ribosomes consist of a small (40S) and a large (60S) subunit. The 40S subunit contains about 33 different proteins and 1 molecule of RNA (18S). The 60S subunit contains about 49 different proteins and 3 molecules of RNA (25S, 5.8S and 5S).

Its subcellular location is the cytoplasm. The protein is Small ribosomal subunit protein eS1 of Kluyveromyces lactis (strain ATCC 8585 / CBS 2359 / DSM 70799 / NBRC 1267 / NRRL Y-1140 / WM37) (Yeast).